A 1265-amino-acid chain; its full sequence is Dynactin subunit 1 (1265 aa).

One can recognise a CAP-Gly domain in the interval Gly27–Arg69. Positions Gly81–Ser179 are disordered. Residues Ser85, Ser110, Ser114, Ser117, and Ser121 each carry the phosphoserine modification. Composition is skewed to low complexity over residues Arg103–Ser138 and Ala161–Ala177. The residue at position 183 (Ser183) is a Phosphoserine. 3 coiled-coil regions span residues Asn213–Gln570, Leu812–Ser836, and Gln967–Thr1084. The segment at Ser1082 to Ser1106 is disordered. Ser1117 is modified (phosphoserine). Residues Glu1128–Glu1160 are a coiled coil.

The protein belongs to the dynactin 150 kDa subunit family. As to quaternary structure, monomer and homodimer. Subunit of dynactin, a multiprotein complex part of a tripartite complex with dynein and a adapter, such as BICDL1, BICD2 or HOOK3. The dynactin complex is built around ACTR1A/ACTB filament and consists of an actin-related filament composed of a shoulder domain, a pointed end and a barbed end. Its length is defined by its flexible shoulder domain. The soulder is composed of 2 DCTN1 subunits, 4 DCTN2 and 2 DCTN3. DCTN1/p150(glued) binds directly to microtubules and to cytoplasmic dynein.

It localises to the cytoplasm. The protein localises to the cytoskeleton. Its function is as follows. Part of the dynactin complex that activates the molecular motor dynein for ultra-processive transport along microtubules. Plays a key role in dynein-mediated retrograde transport of vesicles and organelles along microtubules by recruiting and tethering dynein to microtubules. Binds to both dynein and microtubules providing a link between specific cargos, microtubules and dynein. Essential for targeting dynein to microtubule plus ends, recruiting dynein to membranous cargos and enhancing dynein processivity (the ability to move along a microtubule for a long distance without falling off the track). Can also act as a brake to slow the dynein motor during motility along the microtubule. Can regulate microtubule stability by promoting microtubule formation, nucleation and polymerization and by inhibiting microtubule catastrophe in neurons. Inhibits microtubule catastrophe by binding both to microtubules and to tubulin, leading to enhanced microtubule stability along the axon. Plays a role in metaphase spindle orientation. Plays a role in centriole cohesion and subdistal appendage organization and function. Its recruitment to the centriole in a KIF3A-dependent manner is essential for the maintenance of centriole cohesion and the formation of subdistal appendage. Also required for microtubule anchoring at the mother centriole. Plays a role in primary cilia formation. In Drosophila melanogaster (Fruit fly), this protein is Dynactin subunit 1.